The following is a 262-amino-acid chain: Phosphatidylglycerol--prolipoprotein diacylglyceryl transferase (262 aa).

Transmembrane regions (helical) follow at residues 9 to 29 (LGPLAIRWYALCIVTGLILAV), 41 to 61 (IIPDDILDFILVAFPLAILGA), 80 to 100 (IFAIWNGGLAIYGGLITGALV), and 109 to 129 (LINTWDFLDIAAPSVMIAQSL). Residue arginine 131 participates in a 1,2-diacyl-sn-glycero-3-phospho-(1'-sn-glycerol) binding. Transmembrane regions (helical) follow at residues 167 to 187 (QPTFLYESLWNLLGFALILIF), 197 to 217 (GHITAFYLIWYGFGRMVIEGM), and 226 to 246 (GLRVSQWLSVVLIGLGIMIVI).

This sequence belongs to the Lgt family.

Its subcellular location is the cell membrane. It catalyses the reaction L-cysteinyl-[prolipoprotein] + a 1,2-diacyl-sn-glycero-3-phospho-(1'-sn-glycerol) = an S-1,2-diacyl-sn-glyceryl-L-cysteinyl-[prolipoprotein] + sn-glycerol 1-phosphate + H(+). It functions in the pathway protein modification; lipoprotein biosynthesis (diacylglyceryl transfer). In terms of biological role, catalyzes the transfer of the diacylglyceryl group from phosphatidylglycerol to the sulfhydryl group of the N-terminal cysteine of a prolipoprotein, the first step in the formation of mature lipoproteins. The sequence is that of Phosphatidylglycerol--prolipoprotein diacylglyceryl transferase from Streptococcus pneumoniae (strain P1031).